A 203-amino-acid chain; its full sequence is Methyltransferase-like 26 (203 aa).

Belongs to the UPF0585 family.

The protein is Methyltransferase-like 26 of Xenopus tropicalis (Western clawed frog).